The following is a 69-amino-acid chain: Fungal defensin oryzeasin (69 aa).

Positions 1–18 (MKLLTVAFSLLLLGQVHA) are cleaved as a signal peptide. The propeptide occupies 19 to 26 (SPLVLDKR). Disulfide bonds link cysteine 29–cysteine 60, cysteine 44–cysteine 66, and cysteine 48–cysteine 68.

It belongs to the invertebrate defensin family.

The protein resides in the secreted. Its subcellular location is the target cell membrane. In terms of biological role, shows antibacterial activity against numerous Gram-positive bacteria. It selectively inhibits peptidoglycan biosynthesis through complex formation with the cell wall precursor lipid II (1:1 molar ratio) thus inhibiting cell wall synthesis. The polypeptide is Fungal defensin oryzeasin (Aspergillus oryzae (strain ATCC 42149 / RIB 40) (Yellow koji mold)).